We begin with the raw amino-acid sequence, 1394 residues long: DNA-directed RNA polymerase subunit beta'' (1394 aa).

Cys-224, Cys-295, Cys-302, and Cys-305 together coordinate Zn(2+).

It belongs to the RNA polymerase beta' chain family. RpoC2 subfamily. In plastids the minimal PEP RNA polymerase catalytic core is composed of four subunits: alpha, beta, beta', and beta''. When a (nuclear-encoded) sigma factor is associated with the core the holoenzyme is formed, which can initiate transcription. Requires Zn(2+) as cofactor.

It localises to the plastid. It is found in the chloroplast. It carries out the reaction RNA(n) + a ribonucleoside 5'-triphosphate = RNA(n+1) + diphosphate. Functionally, DNA-dependent RNA polymerase catalyzes the transcription of DNA into RNA using the four ribonucleoside triphosphates as substrates. The polypeptide is DNA-directed RNA polymerase subunit beta'' (Cucumis sativus (Cucumber)).